The following is a 433-amino-acid chain: DNA methyltransferase 1-associated protein 1 (433 aa).

Positions 1-204 (MSADVRDILD…EVVALLAKAK (204 aa)) are required for nuclear localization. In terms of domain architecture, Myb-like spans 148-197 (NNWSKVQTDHLFDLARRFDLRFIVMADRWNRQQHGTKTVEELKERYYEVV). A coiled-coil region spans residues 186-281 (VEELKERYYE…ADQQNEHASN (96 aa)). Over residues 252–264 (EARKKERERKTQD) the composition is skewed to basic and acidic residues. Positions 252–305 (EARKKERERKTQDLQKLISQADQQNEHASNTPSTRKYEKKLHKKKVHQQPRPSR) are disordered. The segment covering 268–285 (LISQADQQNEHASNTPST) has biased composition (polar residues). The span at 288-299 (YEKKLHKKKVHQ) shows a compositional bias: basic residues.

In terms of assembly, interacts with Rel. Interacts with akirin and Bap55.

Its subcellular location is the nucleus. The protein resides in the cytoplasm. Its function is as follows. Involved in transcription repression and activation. Required for larvae and pupal development, and for normal innate immune responses. Involved in modulating the activation of the immune deficiency pathway (Imd), acting either downstream of, or at the level of, the NF-kappa-B factor Rel. Possibly functions with akirin to regulate Rel, and its interaction with the Brahma complex protein Bap55 suggests that it may regulate the IMD pathway at the level of chromatin remodeling. The chain is DNA methyltransferase 1-associated protein 1 from Drosophila melanogaster (Fruit fly).